We begin with the raw amino-acid sequence, 307 residues long: Small ribosomal subunit biogenesis GTPase RsgA (307 aa).

A CP-type G domain is found at 82-240; the sequence is GRYGERIVVA…IADTPGLREV (159 aa). GTP-binding positions include 131–134 and 182–190; these read NKAD and GPSGVGKSS. Zn(2+) contacts are provided by cysteine 264, cysteine 269, histidine 271, and cysteine 277.

The protein belongs to the TRAFAC class YlqF/YawG GTPase family. RsgA subfamily. In terms of assembly, monomer. Associates with 30S ribosomal subunit, binds 16S rRNA. It depends on Zn(2+) as a cofactor.

It localises to the cytoplasm. One of several proteins that assist in the late maturation steps of the functional core of the 30S ribosomal subunit. Helps release RbfA from mature subunits. May play a role in the assembly of ribosomal proteins into the subunit. Circularly permuted GTPase that catalyzes slow GTP hydrolysis, GTPase activity is stimulated by the 30S ribosomal subunit. This Gemmatimonas aurantiaca (strain DSM 14586 / JCM 11422 / NBRC 100505 / T-27) protein is Small ribosomal subunit biogenesis GTPase RsgA.